The following is a 550-amino-acid chain: Glucose-6-phosphate isomerase (550 aa).

Residue glutamate 356 is the Proton donor of the active site. Active-site residues include histidine 387 and lysine 515.

This sequence belongs to the GPI family.

The protein localises to the cytoplasm. It catalyses the reaction alpha-D-glucose 6-phosphate = beta-D-fructose 6-phosphate. Its pathway is carbohydrate biosynthesis; gluconeogenesis. The protein operates within carbohydrate degradation; glycolysis; D-glyceraldehyde 3-phosphate and glycerone phosphate from D-glucose: step 2/4. Its function is as follows. Catalyzes the reversible isomerization of glucose-6-phosphate to fructose-6-phosphate. This Aliivibrio salmonicida (strain LFI1238) (Vibrio salmonicida (strain LFI1238)) protein is Glucose-6-phosphate isomerase.